Here is a 137-residue protein sequence, read N- to C-terminus: Large ribosomal subunit protein uL16 (137 aa).

Belongs to the universal ribosomal protein uL16 family. Part of the 50S ribosomal subunit.

In terms of biological role, binds 23S rRNA and is also seen to make contacts with the A and possibly P site tRNAs. This chain is Large ribosomal subunit protein uL16, found in Xylella fastidiosa (strain M23).